Reading from the N-terminus, the 390-residue chain is Lipid-A-disaccharide synthase (390 aa).

The protein belongs to the LpxB family.

The catalysed reaction is a lipid X + a UDP-2-N,3-O-bis[(3R)-3-hydroxyacyl]-alpha-D-glucosamine = a lipid A disaccharide + UDP + H(+). It participates in bacterial outer membrane biogenesis; LPS lipid A biosynthesis. Condensation of UDP-2,3-diacylglucosamine and 2,3-diacylglucosamine-1-phosphate to form lipid A disaccharide, a precursor of lipid A, a phosphorylated glycolipid that anchors the lipopolysaccharide to the outer membrane of the cell. This Rickettsia felis (strain ATCC VR-1525 / URRWXCal2) (Rickettsia azadi) protein is Lipid-A-disaccharide synthase.